The following is a 550-amino-acid chain: Chaperonin GroEL (550 aa).

ATP-binding positions include 30 to 33, K51, 87 to 91, G415, and D495; these read TLGP and DGTTT.

This sequence belongs to the chaperonin (HSP60) family. Forms a cylinder of 14 subunits composed of two heptameric rings stacked back-to-back. Interacts with the co-chaperonin GroES.

It is found in the cytoplasm. It carries out the reaction ATP + H2O + a folded polypeptide = ADP + phosphate + an unfolded polypeptide.. Functionally, together with its co-chaperonin GroES, plays an essential role in assisting protein folding. The GroEL-GroES system forms a nano-cage that allows encapsulation of the non-native substrate proteins and provides a physical environment optimized to promote and accelerate protein folding. This is Chaperonin GroEL from Shewanella woodyi (strain ATCC 51908 / MS32).